Reading from the N-terminus, the 157-residue chain is 2-C-methyl-D-erythritol 2,4-cyclodiphosphate synthase (157 aa).

Residues aspartate 8 and histidine 10 each coordinate a divalent metal cation. 4-CDP-2-C-methyl-D-erythritol 2-phosphate is bound by residues 8–10 (DVH) and 34–35 (HS). An a divalent metal cation-binding site is contributed by histidine 42. Residues 56–58 (DIG), 61–65 (FPDTD), 132–135 (TTEE), and phenylalanine 139 each bind 4-CDP-2-C-methyl-D-erythritol 2-phosphate.

The protein belongs to the IspF family. As to quaternary structure, homotrimer. Requires a divalent metal cation as cofactor.

It carries out the reaction 4-CDP-2-C-methyl-D-erythritol 2-phosphate = 2-C-methyl-D-erythritol 2,4-cyclic diphosphate + CMP. The protein operates within isoprenoid biosynthesis; isopentenyl diphosphate biosynthesis via DXP pathway; isopentenyl diphosphate from 1-deoxy-D-xylulose 5-phosphate: step 4/6. Its function is as follows. Involved in the biosynthesis of isopentenyl diphosphate (IPP) and dimethylallyl diphosphate (DMAPP), two major building blocks of isoprenoid compounds. Catalyzes the conversion of 4-diphosphocytidyl-2-C-methyl-D-erythritol 2-phosphate (CDP-ME2P) to 2-C-methyl-D-erythritol 2,4-cyclodiphosphate (ME-CPP) with a corresponding release of cytidine 5-monophosphate (CMP). This is 2-C-methyl-D-erythritol 2,4-cyclodiphosphate synthase from Clostridium botulinum (strain Alaska E43 / Type E3).